The following is a 519-amino-acid chain: Developmental regulatory protein wetA (519 aa).

Disordered regions lie at residues 105-165 (PSRP…MRSS), 270-294 (PSSADDMFSSSHSSDPHSISSWQSD), 301-320 (LSFTPDLQGQDSQWWSPMPS), 325-344 (QQASYLESPTPVRTTQNVGN), 389-452 (SQIH…GSNK), and 470-495 (LTGVAPSGSSKTKARREQEARDRRRK). Positions 108–118 (PTATHALSTSP) are enriched in low complexity. The segment covering 155–165 (QSFSPSLMRSS) has biased composition (polar residues). Over residues 301-315 (LSFTPDLQGQDSQWW) the composition is skewed to polar residues. Polar residues predominate over residues 389-400 (SQIHNVSRSPSL). The segment covering 419–428 (PTHRRTHSRK) has biased composition (basic residues). Low complexity predominate over residues 435–452 (NAPKPAKASGSSSRGSNK).

It belongs to the wetA family.

In terms of biological role, brlA, abaA and wetA are pivotal regulators of conidiophore development and conidium maturation. They act individually and together to regulate their own expression and that of numerous other sporulation-specific genes. The polypeptide is Developmental regulatory protein wetA (Penicillium camembertii).